Reading from the N-terminus, the 503-residue chain is Cytochrome P450 7A1 (503 aa).

Residues 4–24 (ISLIWGIAVLVSCCIWFIVGI) traverse the membrane as a helical segment. Cys444 lines the heme pocket.

It belongs to the cytochrome P450 family. Heme serves as cofactor. As to expression, detected in liver (at protein level). Liver.

It is found in the endoplasmic reticulum membrane. The protein localises to the microsome membrane. The catalysed reaction is cholesterol + reduced [NADPH--hemoprotein reductase] + O2 = 7alpha-hydroxycholesterol + oxidized [NADPH--hemoprotein reductase] + H2O + H(+). It catalyses the reaction 4beta-hydroxycholesterol + reduced [NADPH--hemoprotein reductase] + O2 = 4beta,7alpha-dihydroxycholesterol + oxidized [NADPH--hemoprotein reductase] + H2O + H(+). It carries out the reaction lathosterol + reduced [NADPH--hemoprotein reductase] + O2 = 7alpha,8alpha-epoxy-5alpha-cholestan-3beta-ol + oxidized [NADPH--hemoprotein reductase] + H2O + H(+). The enzyme catalyses lathosterol + reduced [NADPH--hemoprotein reductase] + O2 = 5alpha-cholestan-7-oxo-3beta-ol + oxidized [NADPH--hemoprotein reductase] + H2O + H(+). The catalysed reaction is 7-dehydrocholesterol + reduced [NADPH--hemoprotein reductase] + O2 = 7-oxocholesterol + oxidized [NADPH--hemoprotein reductase] + H2O + H(+). It catalyses the reaction (24S)-hydroxycholesterol + reduced [NADPH--hemoprotein reductase] + O2 = (24S)-7alpha-dihydroxycholesterol + oxidized [NADPH--hemoprotein reductase] + H2O + H(+). It carries out the reaction (24R)-hydroxycholesterol + reduced [NADPH--hemoprotein reductase] + O2 = (24R)-7alpha-dihydroxycholesterol + oxidized [NADPH--hemoprotein reductase] + H2O + H(+). The protein operates within lipid metabolism; bile acid biosynthesis. It functions in the pathway steroid metabolism; cholesterol degradation. A cytochrome P450 monooxygenase involved in the metabolism of endogenous cholesterol and its oxygenated derivatives (oxysterols). Mechanistically, uses molecular oxygen inserting one oxygen atom into a substrate, and reducing the second into a water molecule, with two electrons provided by NADPH via cytochrome P450 reductase (CPR; NADPH-ferrihemoprotein reductase). Functions as a critical regulatory enzyme of bile acid biosynthesis and cholesterol homeostasis. Catalyzes the hydroxylation of carbon hydrogen bond at 7-alpha position of cholesterol, a rate-limiting step in cholesterol catabolism and bile acid biosynthesis. 7-alpha hydroxylates several oxysterols, including 4beta-hydroxycholesterol and 24-hydroxycholesterol. Catalyzes the oxidation of the 7,8 double bond of 7-dehydrocholesterol and lathosterol with direct and predominant formation of the 7-keto derivatives. The protein is Cytochrome P450 7A1 (Cyp7a1) of Rattus norvegicus (Rat).